We begin with the raw amino-acid sequence, 711 residues long: Polyribonucleotide nucleotidyltransferase (711 aa).

Aspartate 486 and aspartate 492 together coordinate Mg(2+). The 60-residue stretch at 553–612 (PRIHTIKINPDKIKDVIGKGGSVIRALTEETGTTIEIEDDGTVKIAATDGDKAQHAIRRI) folds into the KH domain. The S1 motif domain occupies 622 to 690 (GRIYNGKVTR…RQGRVRLSIK (69 aa)). The disordered stretch occupies residues 689 to 711 (IKEATEQTPSAAAPEAPAAEQGE). The segment covering 694–711 (EQTPSAAAPEAPAAEQGE) has biased composition (low complexity).

It belongs to the polyribonucleotide nucleotidyltransferase family. In terms of assembly, component of the RNA degradosome, which is a multiprotein complex involved in RNA processing and mRNA degradation. Requires Mg(2+) as cofactor.

It is found in the cytoplasm. The catalysed reaction is RNA(n+1) + phosphate = RNA(n) + a ribonucleoside 5'-diphosphate. Functionally, involved in mRNA degradation. Catalyzes the phosphorolysis of single-stranded polyribonucleotides processively in the 3'- to 5'-direction. This Klebsiella pneumoniae subsp. pneumoniae (strain ATCC 700721 / MGH 78578) protein is Polyribonucleotide nucleotidyltransferase.